We begin with the raw amino-acid sequence, 441 residues long: Ribosomal protein uS12 methylthiotransferase RimO (441 aa).

Residues 8 to 118 form the MTTase N-terminal domain; sequence PKIGFVSLGC…VLEHVHHYVP (111 aa). Positions 17, 53, 82, 150, 154, and 157 each coordinate [4Fe-4S] cluster. The 238-residue stretch at 136-373 folds into the Radical SAM core domain; sequence LTPRHYAYLK…MQLQQQISAE (238 aa). The TRAM domain occupies 376–441; sequence QEKVGREILV…DEYDLWGSRV (66 aa).

The protein belongs to the methylthiotransferase family. RimO subfamily. The cofactor is [4Fe-4S] cluster.

It localises to the cytoplasm. It catalyses the reaction L-aspartate(89)-[ribosomal protein uS12]-hydrogen + (sulfur carrier)-SH + AH2 + 2 S-adenosyl-L-methionine = 3-methylsulfanyl-L-aspartate(89)-[ribosomal protein uS12]-hydrogen + (sulfur carrier)-H + 5'-deoxyadenosine + L-methionine + A + S-adenosyl-L-homocysteine + 2 H(+). Its function is as follows. Catalyzes the methylthiolation of an aspartic acid residue of ribosomal protein uS12. The chain is Ribosomal protein uS12 methylthiotransferase RimO from Shigella boydii serotype 18 (strain CDC 3083-94 / BS512).